The primary structure comprises 247 residues: Cytochrome c oxidase subunit 2 (247 aa).

Residues 12–38 (DVPTPWGLYFQDSSTPNQEGIIELHDN) are Mitochondrial intermembrane-facing. A helical transmembrane segment spans residues 39–59 (IMFYLVLILCTVSWLLFSIVK). The Mitochondrial matrix segment spans residues 60-78 (DSSKNPLPHKYLVHGQTIE). The chain crosses the membrane as a helical span at residues 79–101 (IIWTILPAVVLLIIAFPSFILLY). Residues 102-247 (LCDEVISPAM…KEFLTWLNEQ (146 aa)) are Mitochondrial intermembrane-facing. Residues histidine 182, cysteine 217, glutamate 219, cysteine 221, histidine 225, and methionine 228 each coordinate Cu cation. Glutamate 219 contacts Mg(2+).

This sequence belongs to the cytochrome c oxidase subunit 2 family. In terms of assembly, component of the cytochrome c oxidase (complex IV, CIV), a multisubunit enzyme composed of a catalytic core of 3 subunits and several supernumerary subunits. The complex exists as a monomer or a dimer and forms supercomplexes (SCs) in the inner mitochondrial membrane with ubiquinol-cytochrome c oxidoreductase (cytochrome b-c1 complex, complex III, CIII). Cu cation is required as a cofactor. Post-translationally, the signal sequence of COX2 is processed by IMP1.

Its subcellular location is the mitochondrion inner membrane. It catalyses the reaction 4 Fe(II)-[cytochrome c] + O2 + 8 H(+)(in) = 4 Fe(III)-[cytochrome c] + 2 H2O + 4 H(+)(out). Functionally, component of the cytochrome c oxidase, the last enzyme in the mitochondrial electron transport chain which drives oxidative phosphorylation. The respiratory chain contains 3 multisubunit complexes succinate dehydrogenase (complex II, CII), ubiquinol-cytochrome c oxidoreductase (cytochrome b-c1 complex, complex III, CIII) and cytochrome c oxidase (complex IV, CIV), that cooperate to transfer electrons derived from NADH and succinate to molecular oxygen, creating an electrochemical gradient over the inner membrane that drives transmembrane transport and the ATP synthase. Cytochrome c oxidase is the component of the respiratory chain that catalyzes the reduction of oxygen to water. Electrons originating from reduced cytochrome c in the intermembrane space (IMS) are transferred via the dinuclear copper A center (CU(A)) of subunit 2 and heme A of subunit 1 to the active site in subunit 1, a binuclear center (BNC) formed by heme A3 and copper B (CU(B)). The BNC reduces molecular oxygen to 2 water molecules using 4 electrons from cytochrome c in the IMS and 4 protons from the mitochondrial matrix. This Cyberlindnera mrakii (Yeast) protein is Cytochrome c oxidase subunit 2 (COX2).